We begin with the raw amino-acid sequence, 236 residues long: LexA repressor (236 aa).

Residues 1 to 25 (MNDSNDTSVAGGAAGADSRVLSADS) form a disordered region. The segment at residues 51–71 (IREIGDAVGLTSTSSVAHQLR) is a DNA-binding region (H-T-H motif). Active-site for autocatalytic cleavage activity residues include Ser-160 and Lys-197.

The protein belongs to the peptidase S24 family. Homodimer.

It catalyses the reaction Hydrolysis of Ala-|-Gly bond in repressor LexA.. Functionally, represses a number of genes involved in the response to DNA damage (SOS response), including recA and lexA. In the presence of single-stranded DNA, RecA interacts with LexA causing an autocatalytic cleavage which disrupts the DNA-binding part of LexA, leading to derepression of the SOS regulon and eventually DNA repair. This chain is LexA repressor, found in Mycobacterium tuberculosis (strain ATCC 25177 / H37Ra).